The following is a 247-amino-acid chain: Cell division protein ZapD (247 aa).

This sequence belongs to the ZapD family. Interacts with FtsZ.

Its subcellular location is the cytoplasm. Its function is as follows. Cell division factor that enhances FtsZ-ring assembly. Directly interacts with FtsZ and promotes bundling of FtsZ protofilaments, with a reduction in FtsZ GTPase activity. The protein is Cell division protein ZapD of Salmonella agona (strain SL483).